The primary structure comprises 298 residues: Probable endonuclease 4 (298 aa).

Zn(2+)-binding residues include H69, H111, E146, D180, H183, H215, D228, H230, and E260.

The protein belongs to the AP endonuclease 2 family. Zn(2+) is required as a cofactor.

The catalysed reaction is Endonucleolytic cleavage to 5'-phosphooligonucleotide end-products.. Functionally, endonuclease IV plays a role in DNA repair. It cleaves phosphodiester bonds at apurinic or apyrimidinic (AP) sites, generating a 3'-hydroxyl group and a 5'-terminal sugar phosphate. This Bacillus anthracis (strain A0248) protein is Probable endonuclease 4.